The chain runs to 376 residues: NIF3-like protein 1 (376 aa).

At Lys-108 the chain carries N6-acetyllysine. The tract at residues 243 to 376 is mediates interaction with COPS2; sequence LLLHTGMGRL…ETDRDPLRVV (134 aa). Thr-254 bears the Phosphothreonine mark. At Ser-258 the chain carries Phosphoserine.

The protein belongs to the GTP cyclohydrolase I type 2/NIF3 family. In terms of assembly, homodimer. Interacts with COPS2. Interacts with THOC7. In terms of tissue distribution, ubiquitous. Detected in all tissues tested with higher expression in cerebellum, heart and kidney and to a lower level in cerebrum, lung, liver, spleen and muscle.

Its subcellular location is the cytoplasm. It is found in the nucleus. In terms of biological role, may function as a transcriptional corepressor through its interaction with COPS2, negatively regulating the expression of genes involved in neuronal differentiation. In Mus musculus (Mouse), this protein is NIF3-like protein 1.